The following is a 141-amino-acid chain: Large ribosomal subunit protein uL11 (141 aa).

This sequence belongs to the universal ribosomal protein uL11 family. In terms of assembly, part of the ribosomal stalk of the 50S ribosomal subunit. Interacts with L10 and the large rRNA to form the base of the stalk. L10 forms an elongated spine to which L12 dimers bind in a sequential fashion forming a multimeric L10(L12)X complex. Post-translationally, one or more lysine residues are methylated.

Forms part of the ribosomal stalk which helps the ribosome interact with GTP-bound translation factors. This is Large ribosomal subunit protein uL11 from Thermotoga petrophila (strain ATCC BAA-488 / DSM 13995 / JCM 10881 / RKU-1).